Consider the following 211-residue polypeptide: MEPAREPPARARPPPPAARPAPAAPRPRSPAEAEARGPEGLLRRSGSGYEGSTSWKAALEDTTTRLLLGAIAVLLFAILVVMSILASKGCIKCETPCPEDWLLYGRKCYYFSEEPRDWNTGRQYCHTHEAALAVIQSQKELEFMFKFTRREPWIGLRRVGDDFHWVNGDPFDPDTFTISGTGECVFVEPTRLVSTECLTTRPWVCSKMAYT.

Residues 1 to 53 (MEPAREPPARARPPPPAARPAPAAPRPRSPAEAEARGPEGLLRRSGSGYEGST) form a disordered region. Over residues 10 to 28 (RARPPPPAARPAPAAPRPR) the composition is skewed to pro residues. S29 carries the post-translational modification Phosphoserine. A helical transmembrane segment spans residues 66–86 (LLLGAIAVLLFAILVVMSILA). 3 disulfides stabilise this stretch: C97-C108, C125-C205, and C184-C197. Residues 104–206 (YGRKCYYFSE…CLTTRPWVCS (103 aa)) form the C-type lectin domain.

It localises to the membrane. The chain is C-type lectin domain family 2 member L (Clec2l) from Rattus norvegicus (Rat).